The primary structure comprises 198 residues: Density-regulated protein (198 aa).

Positions 1-11 (MAADISESSGA) are enriched in polar residues. Disordered regions lie at residues 1–20 (MAAD…PRNS) and 72–110 (NSPK…KKKT). Ala-2 bears the N-acetylalanine mark. Residues Ser-20 and Ser-73 each carry the phosphoserine modification. Thr-86 carries the phosphothreonine modification. Over residues 95 to 110 (KQKRGGRGQIKQKKKT) the composition is skewed to basic residues. The SUI1 domain maps to 115-182 (VTIAKIPRAK…DIIDVIQEKW (68 aa)). Ser-189 carries the phosphoserine modification.

This sequence belongs to the DENR family. In terms of assembly, interacts with MCTS1 (via PUA domain); the complex regulates translation reinitiation.

It is found in the cytoplasm. Translation regulator forming a complex with MCTS1 to promote translation reinitiation. Translation reinitiation is the process where the small ribosomal subunit remains attached to the mRNA following termination of translation of a regulatory upstream ORF (uORF), and resume scanning on the same mRNA molecule to initiate translation of a downstream ORF, usually the main ORF (mORF). The MCTS1/DENR complex is pivotal to two linked mechanisms essential for translation reinitiation. Firstly, the dissociation of deacylated tRNAs from post-termination 40S ribosomal complexes during ribosome recycling. Secondly, the recruitment in an EIF2-independent manner of aminoacylated initiator tRNA to P site of 40S ribosomes for a new round of translation. This regulatory mechanism governs the translation of more than 150 genes which translation reinitiation is MCTS1/DENR complex-dependent. This Pongo abelii (Sumatran orangutan) protein is Density-regulated protein (DENR).